The primary structure comprises 211 residues: Probable nicotinate-nucleotide adenylyltransferase (211 aa).

Belongs to the NadD family.

The catalysed reaction is nicotinate beta-D-ribonucleotide + ATP + H(+) = deamido-NAD(+) + diphosphate. It functions in the pathway cofactor biosynthesis; NAD(+) biosynthesis; deamido-NAD(+) from nicotinate D-ribonucleotide: step 1/1. In terms of biological role, catalyzes the reversible adenylation of nicotinate mononucleotide (NaMN) to nicotinic acid adenine dinucleotide (NaAD). The sequence is that of Probable nicotinate-nucleotide adenylyltransferase from Wigglesworthia glossinidia brevipalpis.